Consider the following 139-residue polypeptide: Invertebrate-type lysozyme 3 (139 aa).

Residues 1–18 form the signal peptide; it reads MFVKSLVFLTIAVAYASA. The region spanning 19–138 is the I-type lysozyme domain; sequence DCLHCICMRE…WNGIKSCCGC (120 aa). Cystine bridges form between Cys-20–Cys-106, Cys-23–Cys-138, Cys-25–Cys-31, Cys-36–Cys-45, Cys-58–Cys-86, Cys-76–Cys-82, and Cys-98–Cys-120. The active-site Proton donor is the Glu-28. The Nucleophile role is filled by Asp-39. 51–57 is a substrate binding site; sequence KLPYYED. Substrate is bound by residues Tyr-90 and 113–115; that span reads HNG.

Belongs to the glycosyl hydrolase 22 family. Type-I lysozyme subfamily. As to expression, expressed in pharynx grinder muscle pm7, isthmus marginal cell mc2 and pharyngeal muscle cell pm5, intestinal cells and at lower levels in coelomocytes and epidermis. Expressed at low levels in intestine.

It is found in the late endosome lumen. The protein resides in the recycling endosome lumen. The protein localises to the lysosome lumen. It localises to the secreted. It carries out the reaction Hydrolysis of (1-&gt;4)-beta-linkages between N-acetylmuramic acid and N-acetyl-D-glucosamine residues in a peptidoglycan and between N-acetyl-D-glucosamine residues in chitodextrins.. Its function is as follows. Has bacteriolytic activity against Gram-positive bacteria. Plays a role in defense against bacterial pathogens. Involved in pharyngeal grinder function by enabling proper lysis of ingested bacteria. The sequence is that of Invertebrate-type lysozyme 3 from Caenorhabditis elegans.